We begin with the raw amino-acid sequence, 91 residues long: Acylphosphatase (91 aa).

The Acylphosphatase-like domain occupies 3–91; it reads KLRMNVQGRV…EETEQFKVIQ (89 aa). Active-site residues include R18 and N36.

It belongs to the acylphosphatase family.

It carries out the reaction an acyl phosphate + H2O = a carboxylate + phosphate + H(+). This Enterococcus faecalis (strain ATCC 700802 / V583) protein is Acylphosphatase (acyP).